Here is a 1009-residue protein sequence, read N- to C-terminus: UvrABC system protein A (1009 aa).

Gly32–Ser39 serves as a coordination point for ATP. 2 consecutive ABC transporter domains span residues Trp314–Gln592 and Arg612–Arg941. Residue Gly645–Ser652 coordinates ATP. The segment at Cys744–Cys770 adopts a C4-type zinc-finger fold. Positions Lys956–Ala1009 are disordered. A compositionally biased stretch (low complexity) spans Arg964–Thr997. The segment covering Ala998–Ala1009 has biased composition (basic residues).

Belongs to the ABC transporter superfamily. UvrA family. As to quaternary structure, forms a heterotetramer with UvrB during the search for lesions.

Its subcellular location is the cytoplasm. Functionally, the UvrABC repair system catalyzes the recognition and processing of DNA lesions. UvrA is an ATPase and a DNA-binding protein. A damage recognition complex composed of 2 UvrA and 2 UvrB subunits scans DNA for abnormalities. When the presence of a lesion has been verified by UvrB, the UvrA molecules dissociate. The sequence is that of UvrABC system protein A from Streptomyces avermitilis (strain ATCC 31267 / DSM 46492 / JCM 5070 / NBRC 14893 / NCIMB 12804 / NRRL 8165 / MA-4680).